A 167-amino-acid chain; its full sequence is uncharacterized protein (167 aa).

This sequence to A.aeolicus aq_328.

This is an uncharacterized protein from Aquifex aeolicus (strain VF5).